The following is a 622-amino-acid chain: SLAIN motif-containing protein-like (622 aa).

Residues 34-60 (DLKEVQKLHELVKRLEIQNQQLKIKRN) adopt a coiled-coil conformation. Disordered regions lie at residues 404–441 (HRYS…IQNH) and 473–622 (VRSS…DGCY). Residues 405 to 415 (RYSPSPLSSPR) are compositionally biased toward low complexity. Polar residues-rich tracts occupy residues 416–430 (CQSP…TTSR), 484–502 (QGPS…STPP), 525–591 (VSTS…STVP), and 599–611 (SRRS…MNST).

The protein belongs to the SLAIN motif-containing family.

This Xenopus tropicalis (Western clawed frog) protein is SLAIN motif-containing protein-like.